A 113-amino-acid polypeptide reads, in one-letter code: Large ribosomal subunit protein bL17 (113 aa).

Belongs to the bacterial ribosomal protein bL17 family. In terms of assembly, part of the 50S ribosomal subunit. Contacts protein L32.

The polypeptide is Large ribosomal subunit protein bL17 (Clostridium kluyveri (strain NBRC 12016)).